The chain runs to 348 residues: Thioesterase-like protein TwmA (348 aa).

Its pathway is secondary metabolite biosynthesis. Thioesterase-like protein; part of the gene cluster that mediates the biosynthesis of wortmanamides A and B, reduced long-chain polyketides amidated with a specific omega-amino acid, 5-aminopentanoic acid (5PA). The PKS modules of TwmB are involved in the synthesis of the polyketide backbone, whereas the non-canonical C domain of TwmB is a bonafide condensation domain that specifically selects 5PA and catalyzes amidation to release polyketide chain. The C domain clearly prefers C16 and C18 fatty acyl substrates, which is consistent with simultaneous formation of both octaketide and nonaketide acyl amides wortmanamides A and B. Because TwmB lacks a designated enoylreductase (ER) domain, the required activity is provided the enoyl reductase TwmE. The roles of the remaining enzymes have still to be clarified. The sequence is that of Thioesterase-like protein TwmA from Talaromyces wortmannii (Penicillium wortmannii).